Consider the following 218-residue polypeptide: DNA-directed RNA polymerase III subunit RPC7-like (218 aa).

The disordered stretch occupies residues 133 to 218; the sequence is LPKRPPKTTE…SDDNMDEAIY (86 aa). Residues 139–160 are compositionally biased toward basic and acidic residues; that stretch reads KTTEDKEETIQKLETLEKKEEE. Composition is skewed to acidic residues over residues 161–193 and 201–218; these read VTSE…EETD and NGED…EAIY.

This sequence belongs to the eukaryotic RPC7 RNA polymerase subunit family. In terms of assembly, component of the RNA polymerase III (Pol III) complex consisting of 17 subunits. Pol III exists as two alternative complexes defined by the mutually exclusive incorporation of subunit POLR3G/RPC7alpha or POLR3GL/RPC7beta. Found in a trimeric complex with POLR3C/RPC3 and POLR3F/RPC6. Directly interacts with POLR3C. In terms of tissue distribution, widely expressed. Expressed in CD4-positive T cells.

It localises to the nucleus. Functionally, DNA-dependent RNA polymerase catalyzes the transcription of DNA into RNA using the four ribonucleoside triphosphates as substrates. Specific peripheric component of RNA polymerase III which synthesizes small RNAs, such as 5S rRNA and tRNAs. The sequence is that of DNA-directed RNA polymerase III subunit RPC7-like from Homo sapiens (Human).